A 163-amino-acid chain; its full sequence is Nucleotide-binding protein Mmcs_0777 (163 aa).

This sequence belongs to the YajQ family.

Functionally, nucleotide-binding protein. This chain is Nucleotide-binding protein Mmcs_0777, found in Mycobacterium sp. (strain MCS).